A 601-amino-acid chain; its full sequence is MSKIRTLNRQFISNLETHKAVTDAKRNLILSILKSTTTKREAKNYLTKYQNQFDLPDETPKAGTIYEQSLSRRDNQRELFIKRFLNAQNPFISIYDDEETKLQKIPLRLAIFKIKFPTISLRQWKGIAETFKRLMTLGISPIILLDYDHLSHGSFKKNELYMINQANKMLSILGKPEEQEDLKATILRNSFSVADGQITIDSLELILIPLYQGIIPIIQPIVFNADTTMQEFLKCNTLLNSLCTALVDRRTTDLLSIEKIVMIDPLGGIPSIERKQTSHVFINLSQEYSDIMSELFIGHISPKIRDLHVENLNSMNEILTSIFEKSGNDETTGIITTPEVMSIHNDQLNPIIYNVLTDRSIISSSLPSTNKRTPQLSTTIVKKGVDVQIFDQENNFSGSDFTMDNLIASKKVDKKKLTELLEDSFGKKLIVDEYYERINNRLATFILVGDYDGAAIITWEYSGDKKVAYLDKFAIAKRNQGLPGLADIIFKIILQSHPVELIWRSRKNNPVNKWYFERCCGCMSAPESQWKIFYTGDIFDKRIDRMKDKKKQNNKKKKTATMMMMNNSQKVAGVNADTHVDILKNLEQYSDICEGIVPSFA.

The N-acetyltransferase domain occupies 401–558; the sequence is FTMDNLIASK…KKKQNNKKKK (158 aa).

The protein belongs to the acetyltransferase family.

Its subcellular location is the mitochondrion. It catalyses the reaction L-glutamate + acetyl-CoA = N-acetyl-L-glutamate + CoA + H(+). It functions in the pathway amino-acid biosynthesis; L-arginine biosynthesis; N(2)-acetyl-L-ornithine from L-glutamate: step 1/4. N-acetylglutamate synthase involved in arginine biosynthesis. The protein is Amino-acid acetyltransferase, mitochondrial (ARG2) of Lodderomyces elongisporus (strain ATCC 11503 / CBS 2605 / JCM 1781 / NBRC 1676 / NRRL YB-4239) (Yeast).